A 94-amino-acid polypeptide reads, in one-letter code: Integration host factor subunit beta (94 aa).

Belongs to the bacterial histone-like protein family. Heterodimer of an alpha and a beta chain.

In terms of biological role, this protein is one of the two subunits of integration host factor, a specific DNA-binding protein that functions in genetic recombination as well as in transcriptional and translational control. This chain is Integration host factor subunit beta, found in Chelativorans sp. (strain BNC1).